The sequence spans 161 residues: Globin CTT-VIIB-8 (161 aa).

The N-terminal stretch at 1 to 16 (MKFFAVLALCIVGAIA) is a signal peptide. The Globin domain maps to 18 to 161 (PLTADEASLV…NTYAIVVPRL (144 aa)). Residues histidine 76 and histidine 111 each contribute to the heme b site.

It belongs to the globin family. As to quaternary structure, homodimer.

The chain is Globin CTT-VIIB-8 (CTT-7B8) from Chironomus thummi thummi (Midge).